Reading from the N-terminus, the 398-residue chain is Bifunctional enzyme IspD/IspF (398 aa).

The interval 1-234 (MPSSKRTAAI…ARLAAALGDI (234 aa)) is 2-C-methyl-D-erythritol 4-phosphate cytidylyltransferase. Residues 235–398 (RTGTGYDVHA…LPWNDKGRDT (164 aa)) form a 2-C-methyl-D-erythritol 2,4-cyclodiphosphate synthase region. A divalent metal cation contacts are provided by Asp-241 and His-243. 4-CDP-2-C-methyl-D-erythritol 2-phosphate contacts are provided by residues 241–243 (DVH) and 267–268 (HS). A divalent metal cation is bound at residue His-275. Residues 289–291 (DIG), 365–368 (TTSE), Phe-372, and Arg-375 contribute to the 4-CDP-2-C-methyl-D-erythritol 2-phosphate site.

It in the N-terminal section; belongs to the IspD/TarI cytidylyltransferase family. IspD subfamily. In the C-terminal section; belongs to the IspF family. A divalent metal cation is required as a cofactor.

The enzyme catalyses 2-C-methyl-D-erythritol 4-phosphate + CTP + H(+) = 4-CDP-2-C-methyl-D-erythritol + diphosphate. The catalysed reaction is 4-CDP-2-C-methyl-D-erythritol 2-phosphate = 2-C-methyl-D-erythritol 2,4-cyclic diphosphate + CMP. The protein operates within isoprenoid biosynthesis; isopentenyl diphosphate biosynthesis via DXP pathway; isopentenyl diphosphate from 1-deoxy-D-xylulose 5-phosphate: step 2/6. It functions in the pathway isoprenoid biosynthesis; isopentenyl diphosphate biosynthesis via DXP pathway; isopentenyl diphosphate from 1-deoxy-D-xylulose 5-phosphate: step 4/6. Its function is as follows. Bifunctional enzyme that catalyzes the formation of 4-diphosphocytidyl-2-C-methyl-D-erythritol from CTP and 2-C-methyl-D-erythritol 4-phosphate (MEP) (IspD), and catalyzes the conversion of 4-diphosphocytidyl-2-C-methyl-D-erythritol 2-phosphate (CDP-ME2P) to 2-C-methyl-D-erythritol 2,4-cyclodiphosphate (ME-CPP) with a corresponding release of cytidine 5-monophosphate (CMP) (IspF). This Nitrobacter winogradskyi (strain ATCC 25391 / DSM 10237 / CIP 104748 / NCIMB 11846 / Nb-255) protein is Bifunctional enzyme IspD/IspF.